The sequence spans 254 residues: Dihydroanticapsin 7-dehydrogenase (254 aa).

Residue 9 to 31 (LITGGASGIGYAAVQAFLNQQAN) coordinates NAD(+). S139 contacts substrate. Y152 acts as the Proton acceptor in catalysis.

It belongs to the short-chain dehydrogenases/reductases (SDR) family.

It carries out the reaction L-dihydroanticapsin + NAD(+) = L-anticapsin + NADH + H(+). It functions in the pathway antibiotic biosynthesis; bacilysin biosynthesis. Its function is as follows. Part of the bacABCDEFG operon responsible for the biosynthesis of bacilysin, an irreversible inactivator of the glutaminase domain of glucosamine synthetase. Catalyzes the dehydrogenation of the C7-hydroxyl group in the 4S-tetrahydrotyrosine (4S-H4Tyr) to yield anticapsin (epoxycyclohexanonyl-Ala). This is Dihydroanticapsin 7-dehydrogenase from Bacillus amyloliquefaciens (Bacillus velezensis).